A 678-amino-acid polypeptide reads, in one-letter code: Penicillin-binding protein activator LpoA (678 aa).

Residues 1–26 (MVPSTFSRLKAARCLPVVLAALIFAG) form the signal peptide. Residue Cys27 is the site of N-palmitoyl cysteine attachment. Cys27 carries S-diacylglycerol cysteine lipidation. Disordered regions lie at residues 304 to 338 (AEQP…SVPV) and 495 to 530 (IALT…QFTN). Over residues 513–529 (TTNNPTLQTTPTDDQFT) the composition is skewed to low complexity.

The protein belongs to the LpoA family. As to quaternary structure, interacts with PBP1a.

The protein localises to the cell outer membrane. Its function is as follows. Regulator of peptidoglycan synthesis that is essential for the function of penicillin-binding protein 1A (PBP1a). The protein is Penicillin-binding protein activator LpoA of Escherichia coli O6:H1 (strain CFT073 / ATCC 700928 / UPEC).